The primary structure comprises 322 residues: tRNA uridine(34) hydroxylase (322 aa).

A Rhodanese domain is found at 125 to 219 (QDPDTIVIDA…YGKDPEVKGQ (95 aa)). Residue C179 is the Cysteine persulfide intermediate of the active site.

The protein belongs to the TrhO family.

The catalysed reaction is uridine(34) in tRNA + AH2 + O2 = 5-hydroxyuridine(34) in tRNA + A + H2O. Functionally, catalyzes oxygen-dependent 5-hydroxyuridine (ho5U) modification at position 34 in tRNAs. The chain is tRNA uridine(34) hydroxylase from Bacillus velezensis (strain DSM 23117 / BGSC 10A6 / LMG 26770 / FZB42) (Bacillus amyloliquefaciens subsp. plantarum).